We begin with the raw amino-acid sequence, 371 residues long: Phospho-N-acetylmuramoyl-pentapeptide-transferase (371 aa).

The next 10 membrane-spanning stretches (helical) occupy residues 25–45 (YLTF…VAMG), 79–99 (TMGG…FADL), 104–124 (VWVV…DDYA), 139–159 (KLIA…IFAP), 179–199 (LVIN…AGFS), 210–230 (GLAI…AYLV), 247–267 (VGEL…FLWY), 274–294 (IFMG…IAVC), 299–319 (LVLG…MIQV), and 348–368 (TVVI…LATL).

The protein belongs to the glycosyltransferase 4 family. MraY subfamily. Requires Mg(2+) as cofactor.

The protein resides in the cell inner membrane. It catalyses the reaction UDP-N-acetyl-alpha-D-muramoyl-L-alanyl-gamma-D-glutamyl-meso-2,6-diaminopimeloyl-D-alanyl-D-alanine + di-trans,octa-cis-undecaprenyl phosphate = di-trans,octa-cis-undecaprenyl diphospho-N-acetyl-alpha-D-muramoyl-L-alanyl-D-glutamyl-meso-2,6-diaminopimeloyl-D-alanyl-D-alanine + UMP. It participates in cell wall biogenesis; peptidoglycan biosynthesis. Catalyzes the initial step of the lipid cycle reactions in the biosynthesis of the cell wall peptidoglycan: transfers peptidoglycan precursor phospho-MurNAc-pentapeptide from UDP-MurNAc-pentapeptide onto the lipid carrier undecaprenyl phosphate, yielding undecaprenyl-pyrophosphoryl-MurNAc-pentapeptide, known as lipid I. The protein is Phospho-N-acetylmuramoyl-pentapeptide-transferase of Caulobacter sp. (strain K31).